The sequence spans 239 residues: Putative ABC transporter ATP-binding protein BR1368/BS1330_I1363 (239 aa).

The 230-residue stretch at 5-234 (LSLDRVSVSR…EQVHLHYVEA (230 aa)) folds into the ABC transporter domain. An ATP-binding site is contributed by 37–44 (GDNGVGKT).

It belongs to the ABC transporter superfamily.

The protein resides in the cell inner membrane. Probably part of an ABC transporter complex. Responsible for energy coupling to the transport system. The chain is Putative ABC transporter ATP-binding protein BR1368/BS1330_I1363 from Brucella suis biovar 1 (strain 1330).